Consider the following 295-residue polypeptide: sn-glycerol-3-phosphate transport system permease protein UgpA (295 aa).

At 1-11 (MSSSRPVFRSR) the chain is on the cytoplasmic side. A helical transmembrane segment spans residues 12–32 (WLPYLLVAPQLIITVIFFIWP). The Periplasmic portion of the chain corresponds to 33 to 80 (AGEALWYSLQSVDPFGFSSQFVGLDNFVTLFHDSYYLDSFWTTIKFST). The ABC transmembrane type-1 domain occupies 76 to 284 (IKFSTFVTVS…FLVIVLTVVQ (209 aa)). The chain crosses the membrane as a helical span at residues 81 to 101 (FVTVSGLLVSLFFAALVEYIV). Topologically, residues 102-109 (RGSRFYQT) are cytoplasmic. Residues 110 to 130 (LMLLPYAVAPAVAAVLWIFLF) traverse the membrane as a helical segment. The Periplasmic portion of the chain corresponds to 131-156 (NPGRGLITHFLAEFGYDWNHAQNSGQ). A helical transmembrane segment spans residues 157–177 (AMFLVVFASVWKQISYNFLFF). Residues 178–207 (YAALQSIPRSLIEAAAIDGAGPIRRFFKIA) are Cytoplasmic-facing. Residues 208 to 228 (LPLIAPVSFFLLVVNLVYAFF) form a helical membrane-spanning segment. Residues 229-262 (DTFPVIDAATSGGPVQATTTLIYKIYREGFTGLD) lie on the Periplasmic side of the membrane. A helical membrane pass occupies residues 263-283 (LASSAAQSMVLMFLVIVLTVV). The Cytoplasmic portion of the chain corresponds to 284–295 (QFRYVESKVRYQ).

Belongs to the binding-protein-dependent transport system permease family. UgpAE subfamily. The complex is composed of two ATP-binding proteins (UgpC), two transmembrane proteins (UgpA and UgpE) and a solute-binding protein (UgpB).

The protein resides in the cell inner membrane. In terms of biological role, part of the ABC transporter complex UgpBAEC involved in sn-glycerol-3-phosphate (G3P) import. Probably responsible for the translocation of the substrate across the membrane. The protein is sn-glycerol-3-phosphate transport system permease protein UgpA (ugpA) of Shigella flexneri.